A 280-amino-acid polypeptide reads, in one-letter code: Ribosomal RNA small subunit methyltransferase A (280 aa).

6 residues coordinate S-adenosyl-L-methionine: histidine 15, leucine 17, glycine 42, glutamate 64, aspartate 89, and asparagine 109.

This sequence belongs to the class I-like SAM-binding methyltransferase superfamily. rRNA adenine N(6)-methyltransferase family. RsmA subfamily.

The protein resides in the cytoplasm. The catalysed reaction is adenosine(1518)/adenosine(1519) in 16S rRNA + 4 S-adenosyl-L-methionine = N(6)-dimethyladenosine(1518)/N(6)-dimethyladenosine(1519) in 16S rRNA + 4 S-adenosyl-L-homocysteine + 4 H(+). Specifically dimethylates two adjacent adenosines (A1518 and A1519) in the loop of a conserved hairpin near the 3'-end of 16S rRNA in the 30S particle. May play a critical role in biogenesis of 30S subunits. This is Ribosomal RNA small subunit methyltransferase A from Synechococcus sp. (strain WH7803).